A 268-amino-acid polypeptide reads, in one-letter code: MNAHVPPESVSAAEDSWTVAGRTFRSRLIVGTGKYKDYATNAAAAKAAGAEIVTVAVRRVNLTDPTQPLLIDYVKPTEFTYLPNTAGCFTGEDAVRTLRLAREAGGWDLVKLEVLSDPKTLYPDMEETLRSLKLLVSEGFQVMVYCSDDPVYARKLEEAGAVAIMPLGAPIGSGLGIQNRVNLRIIVENAGVPVLVDAGVGTASDAAIGMELGCDAILMNTAIAEAKDPIRMARAMKHAVIAGREAYLAGRMQKRLYADPSSPLGGLI.

Catalysis depends on Lys-111, which acts as the Schiff-base intermediate with DXP. 1-deoxy-D-xylulose 5-phosphate is bound by residues Gly-172, 198–199 (AG), and 220–221 (NT).

It belongs to the ThiG family. Homotetramer. Forms heterodimers with either ThiH or ThiS.

The protein localises to the cytoplasm. The enzyme catalyses [ThiS sulfur-carrier protein]-C-terminal-Gly-aminoethanethioate + 2-iminoacetate + 1-deoxy-D-xylulose 5-phosphate = [ThiS sulfur-carrier protein]-C-terminal Gly-Gly + 2-[(2R,5Z)-2-carboxy-4-methylthiazol-5(2H)-ylidene]ethyl phosphate + 2 H2O + H(+). Its pathway is cofactor biosynthesis; thiamine diphosphate biosynthesis. Functionally, catalyzes the rearrangement of 1-deoxy-D-xylulose 5-phosphate (DXP) to produce the thiazole phosphate moiety of thiamine. Sulfur is provided by the thiocarboxylate moiety of the carrier protein ThiS. In vitro, sulfur can be provided by H(2)S. This chain is Thiazole synthase, found in Caulobacter sp. (strain K31).